An 85-amino-acid chain; its full sequence is Large ribosomal subunit protein bL27 (85 aa).

Positions 1 to 20 (MAHKKAGGSTRNGRDSESKR) are disordered.

The protein belongs to the bacterial ribosomal protein bL27 family.

This chain is Large ribosomal subunit protein bL27, found in Azotobacter vinelandii (strain DJ / ATCC BAA-1303).